The primary structure comprises 563 residues: F-box/kelch-repeat protein At5g42360 (563 aa).

One can recognise an F-box domain in the interval 129–175 (YRKHVYLPDDILEMCLMRLPLTSLLNAHLVCKKWQSMANTQRFLQMR). Kelch repeat units lie at residues 184-231 (WLFL…SIHE), 232-282 (EIYI…ATEV), and 355-402 (VLIA…IICN).

The protein is F-box/kelch-repeat protein At5g42360 of Arabidopsis thaliana (Mouse-ear cress).